A 37-amino-acid polypeptide reads, in one-letter code: Large ribosomal subunit protein bL36 (37 aa).

Belongs to the bacterial ribosomal protein bL36 family.

The polypeptide is Large ribosomal subunit protein bL36 (Desulforudis audaxviator (strain MP104C)).